We begin with the raw amino-acid sequence, 344 residues long: L-rhamnose-proton symporter (344 aa).

The next 10 membrane-spanning stretches (helical) occupy residues 4–24, 38–58, 74–94, 101–121, 137–157, 175–195, 214–234, 259–279, 290–310, and 323–343; these read AITMGIFWHLIGAASAACFYA, WSVGGIVSWIILPWAISALLL, LPVFLFGAMWGIGNINYGLTM, MGIGIAIGITLIVGTLMTPII, TLLGVLVALIGVGIVTRAGQL, LVLAVMCGIFSAGMSFAMNAA, LPSYVVIMGGGAIINLGFCFI, VLLSTLGGLMWYLQFFFYAWG, ISWMLHMSFYVLCGGIVGLVL, and VLSLGCVVIIVAANIVGIGMA.

The protein belongs to the L-rhamnose transporter (TC 2.A.7.6) family.

It localises to the cell inner membrane. It catalyses the reaction L-rhamnopyranose(in) + H(+)(in) = L-rhamnopyranose(out) + H(+)(out). Uptake of L-rhamnose across the cytoplasmic membrane with the concomitant transport of protons into the cell (symport system). The polypeptide is L-rhamnose-proton symporter (Escherichia coli (strain K12 / MC4100 / BW2952)).